We begin with the raw amino-acid sequence, 159 residues long: uncharacterized protein (159 aa).

3 helical membrane-spanning segments follow: residues 76-96 (AIKY…FIGK), 104-124 (IVML…FSPT), and 131-151 (FGAG…VIGG).

It localises to the membrane. This is an uncharacterized protein from Acanthamoeba polyphaga (Amoeba).